A 2123-amino-acid polypeptide reads, in one-letter code: MPYFNKSKKNEIRPEKSKEEVGGVLFDDSAIHENIDHNMEPQTGDSVATFPDNSDEVVGGDLAALRARLQATIGDYLPEFYEFQQTGRNILYPKPVDIKALQARLNSMPITAWIQPLQQQLEQAGNAFLDRFRLFRKEKDWHNNALEFVKFRLAVKETGWDEQQTRDYNEALKHANRLSGYLSGTLDLIQHLNDNPERQTSWEAVRKTSYDMLLNELLPVDAENNGNQYTAKIRGNLTKNHPDNIKFNTIVNSVTRDERMASEALSAETKGLSARLLSGIALTRNSAEKIDKKSETSGITRDIVALCQVLQGVIKTIKRRGEYIQPLTDWQPSEHKLPGQKEELTKAETVKRELVKSRKVMMQKVQGAKTILGVLSDKTNKNRHRITQTLPYSANPDTNTVSRKTNEAVFRAGIMLLDKIQQTTSGIHKASLASRPLQHAVTQYSALEQMSSGMPSNRILDAKLRSESGRWQEKAEKSKKQLQHILREITALAEEHLKHKFMSALRDELKRAPETLASNNIISNFDTRAKIVVEGLASIEIGMNQSVVRLAGHGEAGRKDLDEQVVAWLQRLERIKGELKTDITQATGQSINNFSRQGMLARRMGEWNEAEKQRYLAALSTEDRAVAEMQYNTLFFEVIQHYLPLLSKETDPQGERLLQRLRLEVSNAAEGTTVYPATMAEILAGMKSTEQAIRDWSGRKLLRVVFLAACLEGVKLMPKLAALPLRVAIKFVITGAKVAWATHKGQQGIRGGEGDVDDEIGEYAKRSFKTASVKVVLSLPPGLATMLGVASIALDVYEGGLKGAGGKIAKNIVGDAPWRALNQGSKIAAEAYTTASMNAALKEGGANPVSHSSTLQQQMDAKPFFDNSDQDADQPRVRRKREMTDEIMLSDGSSRSEAKALPDENELDTDQSKSRPESALAVETLQSEHFDFDRGIRYQDFSDEQKKQTYLHGIKFVLLQIENDGHFAQNIRNNAYLARIGAKLAVPVDIYRYKLNNTFLLPDEIDSKSGVLIRLDSEIPYYYVSEGKDLLENIAWAMPYNAANRGPLKFSLDPGEVTSSHSGVDILNNIRSERFKFETYFNYNAPEAMSIESLSAQLANTIEADYKFKNTSPTNKILISRAIVGAHIPDPGVRATQGEYHIEFDSDELAPAKYLRSFARPFSTLSGEMQLISSSIKGETIQETELHVHQAEYIGSWVDATAGAIISFTPEGWFLNTAQSAAEITADLTEGKDPDPLAVAGLLVGIIPGGKIAAKVGKFTRIGGKTVKYGLILGNKSVDLAIVGKSIKTAVDTGEPLAIYQAFLASGMSVKNSYDIAKNMSSELKISKKIEESARLRKLKALQKNTYKYSMNSKMPVRKFRVGQTDLLGKIHKGEIKISRNNGTTWEKGNQLHLLAYRLQNAGGGRLLPDVFRDKIVIGEYSFKRVKYNQKKLNEMMRIAKMYTPTSNSTERIAKLQQNYKTGKEMSHAPQYDTYNDLSLGEKLDLFINSNTDATTRGVLAGKINESITNINLYETAKGVDAWKTSANKATDVVLAPQNIFLKGRAGECLPESILMGWALQSGQDTKLAKKLMNIHSSSNIAANPLYKSLVELHSDGNASRFGESVISDINMKMLSGAESKLFPTENSSVRVDIPEHTMLISKVNKDGKIKYVFYDPNYGMAYFNKYKEMISFFKKKIKGYDTPKRSTSFRQLDYSHLSDIKIKGKNLNEIIDGEIPQIFRQEDVNLEGITPQDGIYRMLGTHQQENNTYIKSQNNIYQVEWDQTTNTWRVFDSANTNRSRITVPIKRDTDGEWFKYTETGLKGGGLFDEIKNNWLQRKRFKNLQDFNDIVDFEENKWPSEPINKDIHMIWVGTRNISEKNIGLSLETARKNSDYNTTIIYDSGIAGYESAKDFMTEKFKDSKVTLVDFRKKSYFHQLQQEPSFPYYEQAIRDKKYAQASDILRLLVLKYEGGIYKDIDDVQVKAFGSLAFPKGIGVMREYAPEAGKTTAFPNTPIAATKNNPVVNKTLELAVENYHRGETNVLKLAGPDVFTESLYQEIPGMRPQVLGAQLDQFELAKRQALGMRLEKPKGFADEKLTLQEKAKIRQPYEAIRGLSGYVDNGADHSWVTDMPGNSTQSSGLS.

Positions 864-919 (FFDNSDQDADQPRVRRKREMTDEIMLSDGSSRSEAKALPDENELDTDQSKSRPESA) are disordered. The tract at residues 1771-2123 (VFDSANTNRS…GNSTQSSGLS (353 aa)) is tyrosine glycosyltransferase. Residues 1850–1852 (IWV) and 1940–1941 (SD) each bind UDP-N-acetyl-alpha-D-glucosamine. Positions 1957 and 1959 each coordinate a divalent metal cation. The short motif at 1957 to 1960 (DIDD) is the DxDD motif element. UDP-N-acetyl-alpha-D-glucosamine is bound at residue asparagine 1993.

The cofactor is a divalent metal cation.

Its subcellular location is the secreted. The protein localises to the host cell membrane. The catalysed reaction is L-tyrosyl-[protein] + UDP-N-acetyl-alpha-D-glucosamine = O-(N-acetyl-alpha-D-glucosaminyl)-L-tyrosyl-[protein] + UDP + H(+). Its function is as follows. Toxin component of the prophage tail-derived protein translocation system Afp, which is the causative agent of enteric redmouth disease in salmonid fish species. Mono-O-GlcNAcylates the small GTPase RhoA in eukaryotic host cells at Tyr-34, using UDP-N-acetylglucosamine (UDP-GlcNAc) as the sugar donor. Glycosylation of RhoA results in impaired effector and regulator interaction and inactivation of downstream RhoA signaling which leads to actin filament depolymerization and blocks cytokinesis and gastrulation during zebrafish embryo development. To a lesser extent, is also able to glycosylate other Rho family GTPases (RhoB, RhoC, Rac1, Rac2, Rac3, and Cdc42) in vitro at a switch I tyrosine residue, but not Ras proteins. This chain is Toxin Afp18, found in Yersinia ruckeri serotype O1 (strain ATCC 29473 / DSM 18506 / JCM 15110 / CCUG 14190 / NCIMB 2194 / NCTC 12986 / 2396-61).